The sequence spans 252 residues: MMLHAQHMPGQPGAPSLVFLHGFSGDCREWQPVGEQFHGCSRLYIDLPGHGGSAAIPVGGFADVIRLLRATLISYNILKFWLVGYSLGGRVAMMAACQGIPGLCGLVVEGGHPGLQNEQARAERRLSDGRWAERFRHEPLTEVFHDWYQQPVFASLTAQQRQALTALRSQNNGETLAAMLEATSLAVQPDLREALNALAFPFYYLCGERDSKFRALAQEVAATCHVIRNAGHNAHRENPAGVVDSLAQILRL.

Belongs to the AB hydrolase superfamily. MenH family. Monomer.

The enzyme catalyses 5-enolpyruvoyl-6-hydroxy-2-succinyl-cyclohex-3-ene-1-carboxylate = (1R,6R)-6-hydroxy-2-succinyl-cyclohexa-2,4-diene-1-carboxylate + pyruvate. The protein operates within quinol/quinone metabolism; 1,4-dihydroxy-2-naphthoate biosynthesis; 1,4-dihydroxy-2-naphthoate from chorismate: step 3/7. It participates in quinol/quinone metabolism; menaquinone biosynthesis. Its function is as follows. Catalyzes a proton abstraction reaction that results in 2,5-elimination of pyruvate from 2-succinyl-5-enolpyruvyl-6-hydroxy-3-cyclohexene-1-carboxylate (SEPHCHC) and the formation of 2-succinyl-6-hydroxy-2,4-cyclohexadiene-1-carboxylate (SHCHC). The polypeptide is 2-succinyl-6-hydroxy-2,4-cyclohexadiene-1-carboxylate synthase (Salmonella enteritidis PT4 (strain P125109)).